Reading from the N-terminus, the 547-residue chain is bZIP transcription factor 29 (547 aa).

3 disordered regions span residues 1 to 199, 244 to 312, and 333 to 356; these read MGDT…SGGE, NSSE…DIAP, and GDES…TNSV. Positions 15 to 52 are enriched in polar residues; sequence LHSSFGTTSSSIPKNPISQLDLNPNFIRSSAPQFSKPF. The span at 63-73 shows a compositional bias: pro residues; the sequence is PSHPNLIPPTS. Residues 74–89 show a composition bias toward polar residues; the sequence is PFSQIPTTRQPGSHNF. Basic and acidic residues predominate over residues 120 to 132; that stretch reads FRDHDVSMEDRDS. A compositionally biased stretch (polar residues) spans 134–157; that stretch reads VFNSNHSLPPSPFTRCNSTSSSSL. Positions 249-263 are enriched in basic and acidic residues; the sequence is DDSKNGNENRDDMES. Positions 264–275 are enriched in polar residues; that stretch reads SRASGTKTNGSD. Over residues 279–294 the composition is skewed to low complexity; sequence ESSSVNESANNNMNSS. Positions 344 to 356 are enriched in polar residues; the sequence is GSMSRKVSPTNSV. The bZIP domain occupies 394-457; sequence DPKRVKRILA…MGLTNQNNEL (64 aa). Positions 396-417 are basic motif; that stretch reads KRVKRILANRQSAARSKERKMR. The stretch at 416–469 forms a coiled coil; the sequence is MRYIVELEHKVQTLQTEATTLSAQLTLLQRDMMGLTNQNNELKFRLQAMEQQAR. The interval 422 to 457 is leucine-zipper; it reads LEHKVQTLQTEATTLSAQLTLLQRDMMGLTNQNNEL. The segment covering 517-535 has biased composition (low complexity); the sequence is QLRQQPQQMQQQSHQQNHQ. The tract at residues 517–547 is disordered; sequence QLRQQPQQMQQQSHQQNHQNGTMATKSESNE. Polar residues predominate over residues 536–547; that stretch reads NGTMATKSESNE.

As to quaternary structure, forms homodimers. In terms of tissue distribution, expressed in roots, leaves and flowers. Expressed in the root tips, lateral root primordia, and guard cells of leaves, hypocotyls and anthers.

It localises to the cytoplasm. The protein resides in the nucleus. In terms of biological role, transcription factor that acts as a repressor of reproductive development, meristem size and plant growth. Regulates meristem size, cell size and cell number during plant development. Binds to the promoters of the cell cycle regulators CYCB1-2 and SMR4, and genes involved in cell wall organization, such as XTH9, EXPA1 and EXPA3. Possesses transactivation activity in yeast. Possesses transactivation activity in plant protoplasts. Plays a role in abiotic stress response by binding to the 5'-CAGCTG-3' DNA sequence found in the promoters of MYB44 and TRX8. Plays a role in osmosensory response by binding to the 5'-AGCTGT/G-3' DNA sequence found in the promoters of the hypoosmolarity-responsive genes CYP707A1 and CYP707A3. Binds to the 5'-AGCTGT-3' DNA sequence found in the promoter of the ZAT1 gene in response to abiotic stresses, such as oxidative stress, high-light, osmotic shock, salt and heat stresses. The chain is bZIP transcription factor 29 from Arabidopsis thaliana (Mouse-ear cress).